The chain runs to 361 residues: Septin-12 (361 aa).

The 272-residue stretch at M45–E316 folds into the Septin-type G domain. The interval M45–H318 is interaction with SEPTIN7. Positions G55–S62 are G1 motif. Residues G55–S62, T88, G114, R194–E202, G250, and R265 each bind GTP. The tract at residues D111–G114 is G3 motif. The interval A193–D196 is G4 motif. A self-association (via N-terminus) to polymerize octameric septin 12-7-6-2/4-2/4-6-7-12 filaments region spans residues V257 to F361. Residues P333–F361 form a disordered region. A compositionally biased stretch (low complexity) spans T338–A347.

The protein belongs to the TRAFAC class TrmE-Era-EngA-EngB-Septin-like GTPase superfamily. Septin GTPase family. Septins polymerize into heterooligomeric protein complexes that form filaments, and can associate with cellular membranes, actin filaments and microtubules. GTPase activity is required for filament formation. Interacts with SEPTIN6 and SEPTIN11. Component of a octameric complex consisting of SEPTIN12, SEPTIN7, SEPTIN6 and SEPTIN2 or SEPTIN4 in the order 12-7-6-2-2-6-7-12 or 12-7-6-4-4-6-7-12 and located in the sperm annulus; the octamer polymerizes into filaments via the SEPTIN12 N- and C-termini; the SEPTIN12:SEPTIN7 association is mediated by the GTP-binding domains. Interacts with SPAG4 and LMNB1. Associates with alpha- and beta-tubulins.

The protein localises to the cytoplasm. Its subcellular location is the cytoskeleton. The protein resides in the spindle. It localises to the cell projection. It is found in the cilium. The protein localises to the flagellum. Its function is as follows. Filament-forming cytoskeletal GTPase. May play a role in cytokinesis (Potential). Involved in spermatogenesis. Involved in the morphogenesis of sperm heads and the elongation of sperm tails probably implicating the association with alpha- and beta-tubulins. Forms a filamentous structure with SEPTIN7, SEPTIN6, SEPTIN2 and probably SEPTIN4 at the sperm annulus which is required for the structural integrity and motility of the sperm tail during postmeiotic differentiation. This is Septin-12 from Bos taurus (Bovine).